A 253-amino-acid chain; its full sequence is Probable transcriptional regulatory protein TM_0466 (253 aa).

This sequence belongs to the TACO1 family.

Its subcellular location is the cytoplasm. This Thermotoga maritima (strain ATCC 43589 / DSM 3109 / JCM 10099 / NBRC 100826 / MSB8) protein is Probable transcriptional regulatory protein TM_0466.